The chain runs to 260 residues: Major prion protein (260 aa).

The first 22 residues, 1 to 22, serve as a signal peptide directing secretion; it reads MANLGCWMLVLFVATWSDLGLC. The interaction with GRB2, ERI3 and SYN1 stretch occupies residues 23–237; that stretch reads KKRPKPGGWN…ESQAYYQRGS (215 aa). The interval 26–112 is disordered; it reads PKPGGWNTGG…HNQWNKPSKP (87 aa). 6 tandem repeats follow at residues 51 to 58, 59 to 66, 67 to 74, 75 to 82, 83 to 90, and 91 to 98. The interval 51-98 is 6 X 8 AA tandem repeats of P-H-G-G-G-W-G-Q; it reads PQGGGWGQPHGGGWGQPHGGGWGQPHGGGWGQPHGGGWGQPHGGGWGQ. A compositionally biased stretch (gly residues) spans 52-102; it reads QGGGWGQPHGGGWGQPHGGGWGQPHGGGWGQPHGGGWGQPHGGGWGQGGGT. The Cu(2+) site is built by histidine 68, glycine 69, glycine 70, histidine 76, glycine 77, glycine 78, histidine 84, glycine 85, glycine 86, histidine 92, glycine 93, and glycine 94. The cysteines at positions 186 and 221 are disulfide-linked. N-linked (GlcNAc...) asparagine glycans are attached at residues asparagine 188 and asparagine 204. The GPI-anchor amidated serine moiety is linked to residue serine 237. Positions 238–260 are cleaved as a propeptide — removed in mature form; the sequence is SMVLFSSPPVILLISFLIFLIVG.

Belongs to the prion family. Monomer and homodimer. Has a tendency to aggregate into amyloid fibrils containing a cross-beta spine, formed by a steric zipper of superposed beta-strands. Soluble oligomers may represent an intermediate stage on the path to fibril formation. Copper binding may promote oligomerization. Interacts with GRB2, APP, ERI3/PRNPIP and SYN1. Mislocalized cytosolically exposed PrP interacts with MGRN1; this interaction alters MGRN1 subcellular location and causes lysosomal enlargement. Interacts with KIAA1191.

It is found in the cell membrane. The protein resides in the golgi apparatus. Its primary physiological function is unclear. Has cytoprotective activity against internal or environmental stresses. May play a role in neuronal development and synaptic plasticity. May be required for neuronal myelin sheath maintenance. May play a role in iron uptake and iron homeostasis. Soluble oligomers are toxic to cultured neuroblastoma cells and induce apoptosis (in vitro). Association with GPC1 (via its heparan sulfate chains) targets PRNP to lipid rafts. Also provides Cu(2+) or Zn(2+) for the ascorbate-mediated GPC1 deaminase degradation of its heparan sulfate side chains. This Saimiri sciureus (Common squirrel monkey) protein is Major prion protein (PRNP).